The sequence spans 172 residues: 6,7-dimethyl-8-ribityllumazine synthase (172 aa).

5-amino-6-(D-ribitylamino)uracil is bound by residues phenylalanine 22 and 56–58 (AFE). 78–79 (LG) lines the (2S)-2-hydroxy-3-oxobutyl phosphate pocket. A 5-amino-6-(D-ribitylamino)uracil-binding site is contributed by 80–82 (AII). Catalysis depends on histidine 88, which acts as the Proton donor. Phenylalanine 113 serves as a coordination point for 5-amino-6-(D-ribitylamino)uracil. Arginine 127 provides a ligand contact to (2S)-2-hydroxy-3-oxobutyl phosphate.

It belongs to the DMRL synthase family.

It carries out the reaction (2S)-2-hydroxy-3-oxobutyl phosphate + 5-amino-6-(D-ribitylamino)uracil = 6,7-dimethyl-8-(1-D-ribityl)lumazine + phosphate + 2 H2O + H(+). It participates in cofactor biosynthesis; riboflavin biosynthesis; riboflavin from 2-hydroxy-3-oxobutyl phosphate and 5-amino-6-(D-ribitylamino)uracil: step 1/2. In terms of biological role, catalyzes the formation of 6,7-dimethyl-8-ribityllumazine by condensation of 5-amino-6-(D-ribitylamino)uracil with 3,4-dihydroxy-2-butanone 4-phosphate. This is the penultimate step in the biosynthesis of riboflavin. The protein is 6,7-dimethyl-8-ribityllumazine synthase of Protochlamydia amoebophila (strain UWE25).